The sequence spans 558 residues: Coiled-coil domain-containing protein 63 (558 aa).

Residues Met1–Val26 are disordered. The segment covering Lys9–Val26 has biased composition (basic and acidic residues). Coiled coils occupy residues Asn48 to Lys289 and Val339 to Leu416. The interval His531–Val558 is disordered. A compositionally biased stretch (basic and acidic residues) spans Ala533–Lys551.

Plays a role in spermiogenesis. Involved in the elongation of flagella and the formation of sperm heads. This is Coiled-coil domain-containing protein 63 from Bos taurus (Bovine).